The primary structure comprises 215 residues: UPF0323 lipoprotein jhp_0217 (215 aa).

The first 27 residues, 1 to 27, serve as a signal peptide directing secretion; sequence MKKPYRKISDYAIVGGLSALVMVSIVG. Cys28 is lipidated: N-palmitoyl cysteine. Residue Cys28 is the site of S-diacylglycerol cysteine attachment. Residues 158-169 show a composition bias toward polar residues; the sequence is QRTYKSPQAYQR. Positions 158–215 are disordered; the sequence is QRTYKSPQAYQRSQNSFSKSAPSASSMGTASKGQSGFFGSSRPTSSPAISSGTRGFNA. The segment covering 170-183 has biased composition (low complexity); that stretch reads SQNSFSKSAPSASS. Residues 184–195 are compositionally biased toward polar residues; sequence MGTASKGQSGFF. Low complexity predominate over residues 197–208; it reads SSRPTSSPAISS.

The protein belongs to the UPF0323 family.

The protein resides in the cell membrane. The chain is UPF0323 lipoprotein jhp_0217 from Helicobacter pylori (strain J99 / ATCC 700824) (Campylobacter pylori J99).